The primary structure comprises 588 residues: Sulfite reductase [NADPH] hemoprotein beta-component (588 aa).

C442, C448, C487, and C491 together coordinate [4Fe-4S] cluster. Residue C491 coordinates siroheme.

It belongs to the nitrite and sulfite reductase 4Fe-4S domain family. In terms of assembly, alpha(8)-beta(8). The alpha component is a flavoprotein, the beta component is a hemoprotein. Siroheme is required as a cofactor. [4Fe-4S] cluster serves as cofactor.

It catalyses the reaction hydrogen sulfide + 3 NADP(+) + 3 H2O = sulfite + 3 NADPH + 4 H(+). Its pathway is sulfur metabolism; hydrogen sulfide biosynthesis; hydrogen sulfide from sulfite (NADPH route): step 1/1. Functionally, component of the sulfite reductase complex that catalyzes the 6-electron reduction of sulfite to sulfide. This is one of several activities required for the biosynthesis of L-cysteine from sulfate. The sequence is that of Sulfite reductase [NADPH] hemoprotein beta-component from Actinobacillus pleuropneumoniae serotype 7 (strain AP76).